The chain runs to 362 residues: tRNA/tmRNA (uracil-C(5))-methyltransferase (362 aa).

S-adenosyl-L-methionine contacts are provided by Gln186, Tyr214, Asn219, Glu235, and Asp295. Catalysis depends on Cys320, which acts as the Nucleophile. Glu354 functions as the Proton acceptor in the catalytic mechanism.

The protein belongs to the class I-like SAM-binding methyltransferase superfamily. RNA M5U methyltransferase family. TrmA subfamily.

The enzyme catalyses uridine(54) in tRNA + S-adenosyl-L-methionine = 5-methyluridine(54) in tRNA + S-adenosyl-L-homocysteine + H(+). It catalyses the reaction uridine(341) in tmRNA + S-adenosyl-L-methionine = 5-methyluridine(341) in tmRNA + S-adenosyl-L-homocysteine + H(+). Functionally, dual-specificity methyltransferase that catalyzes the formation of 5-methyluridine at position 54 (m5U54) in all tRNAs, and that of position 341 (m5U341) in tmRNA (transfer-mRNA). This chain is tRNA/tmRNA (uracil-C(5))-methyltransferase, found in Stutzerimonas stutzeri (strain A1501) (Pseudomonas stutzeri).